A 245-amino-acid polypeptide reads, in one-letter code: Ubiquinone/menaquinone biosynthesis C-methyltransferase UbiE (245 aa).

Residues T71, D92, and 118–119 (DA) contribute to the S-adenosyl-L-methionine site.

The protein belongs to the class I-like SAM-binding methyltransferase superfamily. MenG/UbiE family.

It catalyses the reaction a 2-demethylmenaquinol + S-adenosyl-L-methionine = a menaquinol + S-adenosyl-L-homocysteine + H(+). The catalysed reaction is a 2-methoxy-6-(all-trans-polyprenyl)benzene-1,4-diol + S-adenosyl-L-methionine = a 5-methoxy-2-methyl-3-(all-trans-polyprenyl)benzene-1,4-diol + S-adenosyl-L-homocysteine + H(+). Its pathway is quinol/quinone metabolism; menaquinone biosynthesis; menaquinol from 1,4-dihydroxy-2-naphthoate: step 2/2. It functions in the pathway cofactor biosynthesis; ubiquinone biosynthesis. Methyltransferase required for the conversion of demethylmenaquinol (DMKH2) to menaquinol (MKH2) and the conversion of 2-polyprenyl-6-methoxy-1,4-benzoquinol (DDMQH2) to 2-polyprenyl-3-methyl-6-methoxy-1,4-benzoquinol (DMQH2). The protein is Ubiquinone/menaquinone biosynthesis C-methyltransferase UbiE of Neisseria meningitidis serogroup C / serotype 2a (strain ATCC 700532 / DSM 15464 / FAM18).